We begin with the raw amino-acid sequence, 648 residues long: Transcription termination factor FttA (648 aa).

A KHa region spans residues 9–76 (DDILKEIREI…ISVRPDPDIL (68 aa)). Positions 77 to 144 (LPPEKAEELI…WAPRVVRTPP (68 aa)) are KHb. Positions 185 to 395 (WIRITGLGGF…LVMESTYGGS (211 aa)) are metallo-beta-lactamase N-terminus. 6 residues coordinate Zn(2+): His-253, His-255, Asp-257, His-258, His-341, and Asp-364. The interval 396 to 589 (NDYQMPREEA…MEVHTIDGFS (194 aa)) is beta-Casp. Positions 590-648 (GHADRRELMSYVARVRPRPERIITVHGEAHKCLDLSSSIHKKFGISTRAPNNLDAIRLK) are metallo-beta-lactamase C-terminus. A Zn(2+)-binding site is contributed by His-615.

This sequence belongs to the metallo-beta-lactamase superfamily. RNA-metabolizing metallo-beta-lactamase-like family. FttA subfamily. As to quaternary structure, homodimer. Probably interacts transiently with RNA polymerase (RNAP), (via at least the RNAP stalk subunits Rpo4 and Rpo7), interacts transiently with the Spt4-Spt5 complex. Zn(2+) is required as a cofactor.

Transcription termination is stimulated by the Spt4-Spt5 complex. Dipicolinic acid inhibits FttA-mediated termination in vitro and inhibits growth in vivo. Its function is as follows. Terminates transcription on the whole genome. Termination is linked to FttA-mediated RNA cleavage and does not require NTP hydrolysis. Cleaves endonucleolytically at the RNA exit channel of RNA polymerase (RNAP); the 5'-3' exonuclease activity of this protein degrades the nascent RNA released from RNAP. Facilitates transcription termination; addition of this factor to stalled transcription elongation complexes (TEC) promotes nascent transcript cleavage and releases RNA polymerase (RNAP) from DNA in vitro. Transcription termination competes with productive transcription elongation. Termination is stimulated by C-rich transcripts and inhibited by G-rich transcripts; the Spt4-Spt5 complex enhances termination on C-less transcripts. Yields an approximately 100 nucleotide RNA, consistent with endonucleolytic cleavage at the RNA exit channel of RNAP. The sequence is that of Transcription termination factor FttA from Thermococcus kodakarensis (strain ATCC BAA-918 / JCM 12380 / KOD1) (Pyrococcus kodakaraensis (strain KOD1)).